The chain runs to 409 residues: Argininosuccinate synthase (409 aa).

Residues 8-16 (AYSGGLDTS) and Ala-34 contribute to the ATP site. Residue Tyr-85 participates in L-citrulline binding. Gly-115 contributes to the ATP binding site. L-aspartate is bound by residues Thr-117, Asn-121, and Asp-122. Residue Asn-121 participates in L-citrulline binding. Arg-125, Ser-178, Ser-187, Glu-268, and Tyr-280 together coordinate L-citrulline.

This sequence belongs to the argininosuccinate synthase family. Type 1 subfamily. In terms of assembly, homotetramer.

The protein resides in the cytoplasm. It carries out the reaction L-citrulline + L-aspartate + ATP = 2-(N(omega)-L-arginino)succinate + AMP + diphosphate + H(+). It participates in amino-acid biosynthesis; L-arginine biosynthesis; L-arginine from L-ornithine and carbamoyl phosphate: step 2/3. This chain is Argininosuccinate synthase, found in Thermotoga petrophila (strain ATCC BAA-488 / DSM 13995 / JCM 10881 / RKU-1).